A 584-amino-acid chain; its full sequence is Probable terpene synthase 9 (584 aa).

Residues D339, D343, and E491 each coordinate Mg(2+). Positions 339–343 match the DDXXD motif motif; sequence DDMYD.

Belongs to the terpene synthase family. The cofactor is Mg(2+).

In terms of biological role, probable sesquiterpene synthase. In Ricinus communis (Castor bean), this protein is Probable terpene synthase 9 (TPS9).